The primary structure comprises 416 residues: Enterobactin exporter EntS (416 aa).

At 1 to 21 (MNKQSWLLNLSLLKTHPAFRA) the chain is on the cytoplasmic side. The chain crosses the membrane as a helical span at residues 22–42 (VFLARFISIVSLGLLGVAVPV). The Periplasmic segment spans residues 43 to 55 (QIQMMTHSTWQVG). The helical transmembrane segment at 56-76 (LSVTLTGGAMFVGLMVGGVLA) threads the bilayer. Residues 77–83 (DRYERKK) lie on the Cytoplasmic side of the membrane. The helical transmembrane segment at 84 to 104 (VILLARGTCGIGFIGLCLNAL) threads the bilayer. At 105–109 (LPEPS) the chain is on the periplasmic side. The helical transmembrane segment at 110–130 (LLAIYLLGLWDGFFASLGVTA) threads the bilayer. Topologically, residues 131 to 156 (LLAATPALVGRENLMQAGAITMLTVR) are cytoplasmic. A helical membrane pass occupies residues 157-177 (LGSVISPMIGGLLLATGGVAW). Residue N178 is a topological domain, periplasmic. Residues 179-199 (YGLAAAGTFITLLPLLSLPAL) form a helical membrane-spanning segment. The Cytoplasmic portion of the chain corresponds to 200 to 218 (PPPPQPREHPLKSLLAGFR). The chain crosses the membrane as a helical span at residues 219 to 239 (FLLASPLVGGIALLGGLLTMA). Residues 240-256 (SAVRVLYPALADNWQMS) are Periplasmic-facing. A helical transmembrane segment spans residues 257-277 (AAQIGFLYAAIPLGAAIGALT). Residues 278–287 (SGKLAHSARP) are Cytoplasmic-facing. A helical transmembrane segment spans residues 288–307 (GLLMLLSTLGSFLAIGLFGL). Residues 308-313 (MPMWIL) are Periplasmic-facing. Residues 314 to 336 (GVVCLALFGWLSAVSSLLQYTML) form a helical membrane-spanning segment. Topologically, residues 337–356 (QTQTPEAMLGRINGLWTAQN) are cytoplasmic. The chain crosses the membrane as a helical span at residues 357–377 (VTGDAIGAALLGGLGAMMTPV). Residue A378 is a topological domain, periplasmic. Residues 379-399 (SASASGFGLLIIGVLLLLVLV) form a helical membrane-spanning segment. Topologically, residues 400–416 (ELRRFRQTPPQVTASDG) are cytoplasmic.

It belongs to the major facilitator superfamily. EntS (TC 2.A.1.38) family.

The protein resides in the cell inner membrane. Its function is as follows. Component of an export pathway for enterobactin. This is Enterobactin exporter EntS from Escherichia coli O157:H7.